Here is a 314-residue protein sequence, read N- to C-terminus: Probable manganese-dependent inorganic pyrophosphatase (314 aa).

Residues histidine 7, aspartate 11, aspartate 13, aspartate 72, histidine 94, and aspartate 146 each contribute to the Mn(2+) site.

This sequence belongs to the PPase class C family. It depends on Mn(2+) as a cofactor.

It localises to the cytoplasm. It catalyses the reaction diphosphate + H2O = 2 phosphate + H(+). The chain is Probable manganese-dependent inorganic pyrophosphatase (ppaC) from Deinococcus radiodurans (strain ATCC 13939 / DSM 20539 / JCM 16871 / CCUG 27074 / LMG 4051 / NBRC 15346 / NCIMB 9279 / VKM B-1422 / R1).